Here is a 798-residue protein sequence, read N- to C-terminus: MAEAHQASSLLSSLSSDGAEVELSSPVWQEIYLCALRSWKRHLWRVWNDFLAGVVPATPLSWLFLFSTIQLACLLQLDPSLGLMEKIKELLPDWGGQHHQLQGFLSAAVFASCLWGALIFTLHVALRLLLSHHGWLLEPHGAMSSPTKTWLALVRIFSGRHPRLFSFQRALPRQPVPSAQETVRKYLESVRPVLGDDAFDRATALANDFLRLHAPRLQLYLQLKSWCTSNYVSDWWEEFVYLRSRGSLINSTYYMMDFLYVTPTPLQAARAGNAVHTLLLYRHLLNRQEISPTLLMGMRPLCSAQYERMFNTTRIPGVEKDHLRHLQDSRHVAVFHRGRFFRVGTHSPNGLLSPRALEQQFQDILDDPSPACPLEEHLAALTAAPRSMWAQVRESVKTHAATALEAVEGAAFFVSLDSEPAGLTREDPAASLDAYAHALLAGRGHDRWFDKSFTLIVFSNGKLGLSVEHSWADCPVSGHLWEFTLATECFQLGYATDGHCKGHPDPTLPQPQRLQWDLPEQIQPSISLALRGAKTLSGNIDCHVFPFSHFGKSFIKCCHVSSDSFIQLVLQLAHFRDRGQFCLTYESAMTRLFLEGRTETVRSCTREACQFVRAMDNKETDQHCLALFRVAVDKHQALLKAAMSGQGIDRHLFALYIMSRLLHMQSPFLTQVQSQQWLLSTSQVPVQQTHLIDVHNYPDYVSSGGGFGPAHDHGYGISYIFMGENAITFHISSKKSSTETDSHRLGQHIENALLDVASLFRVGQHFKRQFRGENSDYRYNFLSCKTVDPNTPTSSTNL.

Residues Met1–Ala52 lie on the Cytoplasmic side of the membrane. A helical membrane pass occupies residues Gly53–Leu75. Residues Gln76–Gly103 are Lumenal-facing. Residues Phe104–Leu126 form a helical membrane-spanning segment. Residues Arg127 to Leu798 are Cytoplasmic-facing. His469 functions as the Proton acceptor in the catalytic mechanism. Position 551–563 (Gly551–Asp563) interacts with CoA. The (R)-carnitine site is built by Tyr585, Ser587, and Thr598. The required for interaction with GRIA1 stretch occupies residues Leu759–Leu798.

It belongs to the carnitine/choline acetyltransferase family. Peripherally associated with AMPAR complex. AMPAR complex consists of an inner core made of 4 pore-forming GluA/GRIA proteins (GRIA1, GRIA2, GRIA3 and GRIA4) and 4 major auxiliary subunits arranged in a twofold symmetry. One of the two pairs of distinct binding sites is occupied either by CNIH2, CNIH3 or CACNG2, CACNG3. The other harbors CACNG2, CACNG3, CACNG4, CACNG8 or GSG1L. This inner core of AMPAR complex is complemented by outer core constituents binding directly to the GluA/GRIA proteins at sites distinct from the interaction sites of the inner core constituents. Outer core constituents include at least PRRT1, PRRT2, CKAMP44/SHISA9, FRRS1L and NRN1. The proteins of the inner and outer core serve as a platform for other, more peripherally associated AMPAR constituents, including CPT1C. Alone or in combination, these auxiliary subunits control the gating and pharmacology of the AMPAR complex and profoundly impact their biogenesis and protein processing. Interacts with SACM1L; the interaction regulates SACM1L phosphatidylinositol-3-phosphatase activity and translocation to endoplasmic reticulum/trans Golgi network in a malonyl-CoA dependent manner. Interacts with ATL1. Predominantly expressed in brain (at protein level) and testis, highly expressed in the hippocampus, amygdala and cerebellum. Expressed in neurons but not astrocytes. Expressed in the ventral horn from spinal cords.

Its subcellular location is the synapse. The protein localises to the cell projection. The protein resides in the axon. It is found in the dendrite. It localises to the dendritic spine. Its subcellular location is the endoplasmic reticulum membrane. The enzyme catalyses S-hexadecanoyl-L-cysteinyl-[protein] + H2O = L-cysteinyl-[protein] + hexadecanoate + H(+). Functionally, palmitoyl thioesterase specifically expressed in the endoplasmic reticulum of neurons. Modulates the trafficking of the glutamate receptor, AMPAR, to plasma membrane through depalmitoylation of GRIA1. Also regulates AMPR trafficking through the regulation of SACM1L phosphatidylinositol-3-phosphatase activity by interaction in a malonyl-CoA dependent manner. Binds malonyl-CoA and couples malonyl-CoA to ceramide levels, necessary for proper spine maturation and contributing to systemic energy homeostasis and appetite control. Binds to palmitoyl-CoA, but does not have carnitine palmitoyltransferase 1 catalytic activity or at very low levels. The protein is Palmitoyl thioesterase CPT1C (Cpt1c) of Mus musculus (Mouse).